We begin with the raw amino-acid sequence, 488 residues long: 3-octaprenyl-4-hydroxybenzoate carboxy-lyase (488 aa).

Asn172 contributes to the Mn(2+) binding site. Residues Ile175 to Arg177, Arg189 to Leu191, and Arg194 to Gly195 each bind prenylated FMN. A Mn(2+)-binding site is contributed by Glu238. The active-site Proton donor is Asp287.

This sequence belongs to the UbiD family. In terms of assembly, homohexamer. Prenylated FMN is required as a cofactor. Mn(2+) serves as cofactor.

The protein resides in the cell membrane. The catalysed reaction is a 4-hydroxy-3-(all-trans-polyprenyl)benzoate + H(+) = a 2-(all-trans-polyprenyl)phenol + CO2. The protein operates within cofactor biosynthesis; ubiquinone biosynthesis. Its function is as follows. Catalyzes the decarboxylation of 3-octaprenyl-4-hydroxy benzoate to 2-octaprenylphenol, an intermediate step in ubiquinone biosynthesis. The sequence is that of 3-octaprenyl-4-hydroxybenzoate carboxy-lyase from Legionella pneumophila (strain Lens).